We begin with the raw amino-acid sequence, 417 residues long: WAT1-related protein At3g02690, chloroplastic (417 aa).

The transit peptide at 1–68 (MEWPWSAIAA…RRINGDSVVR (68 aa)) directs the protein to the chloroplast. The interval 67–92 (VRRSTTSNNSTEETESSSSSSSVDCV) is disordered. A compositionally biased stretch (low complexity) spans 68 to 89 (RRSTTSNNSTEETESSSSSSSV). 10 consecutive transmembrane segments (helical) span residues 122–142 (FLEW…MVAM), 152–172 (FFVA…FAVY), 183–203 (AWFS…GFLA), 213–233 (LGSV…SFLF), 237–257 (IGIV…LLEV), 269–289 (LWGS…IGTV), 301–321 (IMAT…ISVI), 339–359 (VIAL…VYFY), 369–389 (LSSL…LYLN), and 392–412 (FSSL…LVNF). EamA domains follow at residues 133–255 (FFWG…LLLL) and 283–411 (SMAI…YLVN).

The protein belongs to the drug/metabolite transporter (DMT) superfamily. Plant drug/metabolite exporter (P-DME) (TC 2.A.7.4) family.

It localises to the plastid. The protein localises to the chloroplast membrane. This is WAT1-related protein At3g02690, chloroplastic from Arabidopsis thaliana (Mouse-ear cress).